We begin with the raw amino-acid sequence, 181 residues long: Negative modulator of initiation of replication (181 aa).

3 interaction with DNA regions span residues 87-88 (AV), 116-120 (RTRVY), and 150-156 (NTNTGRK).

Belongs to the SeqA family. In terms of assembly, homodimer. Polymerizes to form helical filaments.

It is found in the cytoplasm. Its function is as follows. Negative regulator of replication initiation, which contributes to regulation of DNA replication and ensures that replication initiation occurs exactly once per chromosome per cell cycle. Binds to pairs of hemimethylated GATC sequences in the oriC region, thus preventing assembly of replication proteins and re-initiation at newly replicated origins. Repression is relieved when the region becomes fully methylated. In Shigella flexneri, this protein is Negative modulator of initiation of replication.